The following is a 172-amino-acid chain: Small integral membrane protein 23 (172 aa).

The Cytoplasmic segment spans residues 1-36 (MATQQVDSRRQVAAEQVAAQLLERRRGSHCDDEKQT). The helical; Signal-anchor for type II membrane protein transmembrane segment at 37–53 (LLALLILVLYLSTEIWG) threads the bilayer. At 54-172 (SSWEVSERIR…LEISLSGAEL (119 aa)) the chain is on the extracellular side. Positions 96–128 (LKEKLHVFSEKLEEEVQQLEQLAWDLELWLDAL) form a coiled coil.

It is found in the cell membrane. The polypeptide is Small integral membrane protein 23 (SMIM23) (Homo sapiens (Human)).